A 290-amino-acid polypeptide reads, in one-letter code: Probable endonuclease 4 (290 aa).

The Zn(2+) site is built by H66, H106, E143, D179, H182, H216, D229, H231, and E261.

Belongs to the AP endonuclease 2 family. The cofactor is Zn(2+).

It catalyses the reaction Endonucleolytic cleavage to 5'-phosphooligonucleotide end-products.. Endonuclease IV plays a role in DNA repair. It cleaves phosphodiester bonds at apurinic or apyrimidinic (AP) sites, generating a 3'-hydroxyl group and a 5'-terminal sugar phosphate. The sequence is that of Probable endonuclease 4 from Solibacter usitatus (strain Ellin6076).